Consider the following 242-residue polypeptide: Enolase-phosphatase E1 (242 aa).

Belongs to the HAD-like hydrolase superfamily. MasA/MtnC family. Monomer. Mg(2+) serves as cofactor.

It carries out the reaction 5-methylsulfanyl-2,3-dioxopentyl phosphate + H2O = 1,2-dihydroxy-5-(methylsulfanyl)pent-1-en-3-one + phosphate. The protein operates within amino-acid biosynthesis; L-methionine biosynthesis via salvage pathway; L-methionine from S-methyl-5-thio-alpha-D-ribose 1-phosphate: step 3/6. It functions in the pathway amino-acid biosynthesis; L-methionine biosynthesis via salvage pathway; L-methionine from S-methyl-5-thio-alpha-D-ribose 1-phosphate: step 4/6. Its function is as follows. Bifunctional enzyme that catalyzes the enolization of 2,3-diketo-5-methylthiopentyl-1-phosphate (DK-MTP-1-P) into the intermediate 2-hydroxy-3-keto-5-methylthiopentenyl-1-phosphate (HK-MTPenyl-1-P), which is then dephosphorylated to form the acireductone 1,2-dihydroxy-3-keto-5-methylthiopentene (DHK-MTPene). This Synechococcus sp. (strain WH7803) protein is Enolase-phosphatase E1.